We begin with the raw amino-acid sequence, 1364 residues long: Kinectin (1364 aa).

Over 1–6 the chain is Cytoplasmic; that stretch reads MEFYES. Residues 7–29 form a helical; Signal-anchor for type II membrane protein membrane-spanning segment; it reads TYFIILIPSVVITVIFLFFWLFM. Residues 30 to 1364 lie on the Lumenal side of the membrane; the sequence is KETLYDEVLA…KGREHYQLVE (1335 aa). 4 stretches are compositionally biased toward basic and acidic residues: residues 46-56, 73-86, 121-135, and 170-179; these read KFPPTKSDKKK, HESD…DFKL, QKAA…ESEG, and QKNDDQDTKT. Positions 46–207 are disordered; the sequence is KFPPTKSDKK…VKQENVSGKK (162 aa). 10 N-linked (GlcNAc...) asparagine glycosylation sites follow: N202, N267, N623, N638, N704, N775, N976, N1061, N1088, and N1094. Residues 315–1085 adopt a coiled-coil conformation; it reads KASKAESAAA…VETRELLQKL (771 aa). The stretch at 1116 to 1306 forms a coiled coil; sequence SGSEDIKVME…ASLEREIGKV (191 aa).

The protein belongs to the kinectin family. In terms of assembly, parallel homodimers formed between the membrane-bound and the cytosolic form, and also between 2 cytosolic forms. Post-translationally, both the membrane and cytoplasmic forms seem to be myristoylated.

The protein resides in the endoplasmic reticulum membrane. Receptor for kinesin thus involved in kinesin-driven vesicle motility. In Gallus gallus (Chicken), this protein is Kinectin (KTN1).